The primary structure comprises 280 residues: Energy-coupling factor transporter ATP-binding protein EcfA1 (280 aa).

The ABC transporter domain occupies 6-241 (LRTENISFQY…SHMLQEIGLD (236 aa)). 40–47 (GQNGSGKS) contacts ATP.

It belongs to the ABC transporter superfamily. Energy-coupling factor EcfA family. Forms a stable energy-coupling factor (ECF) transporter complex composed of 2 membrane-embedded substrate-binding proteins (S component), 2 ATP-binding proteins (A component) and 2 transmembrane proteins (T component).

Its subcellular location is the cell membrane. ATP-binding (A) component of a common energy-coupling factor (ECF) ABC-transporter complex. Unlike classic ABC transporters this ECF transporter provides the energy necessary to transport a number of different substrates. The protein is Energy-coupling factor transporter ATP-binding protein EcfA1 of Bacillus cereus (strain ATCC 10987 / NRS 248).